Here is a 329-residue protein sequence, read N- to C-terminus: Probable cell division protein WhiA (329 aa).

Positions 275-308 form a DNA-binding region, H-T-H motif; sequence SLEELGALADPPLTKDAVAGRIRRLLAMADKRAQ.

Belongs to the WhiA family.

Functionally, involved in cell division and chromosome segregation. In Streptomyces griseus subsp. griseus (strain JCM 4626 / CBS 651.72 / NBRC 13350 / KCC S-0626 / ISP 5235), this protein is Probable cell division protein WhiA.